A 171-amino-acid polypeptide reads, in one-letter code: Large ribosomal subunit protein uL22 (171 aa).

Belongs to the universal ribosomal protein uL22 family.

This is Large ribosomal subunit protein uL22 (RPL17) from Zea mays (Maize).